Reading from the N-terminus, the 355-residue chain is MTALKNDRFLRALLKQPVDVTPVWMMRQAGRYLPEYRATRAKAGDFMSLCMNPELACEVTLQPLDRYPQLDAAILFSDILTIPDAMGQGLYFETGEGPRFRKVVSSLADIEALPVPDPEQDLGYVMDAVRTIRRELNGRVPLIGFSGSPWTLATYMVEGGSSKDFRKSKAMLYDNPKAMHALLDKLAQSVTSYLNGQIRAGAQAVQIFDSWGGSLSAAAYQEFSLVYMRKIVDGLIREHDGRRVPVILFTKGGGLWLESMAEVGAEALGLDWTCDIGSARARVGERVALQGNMDPSVLYANPAAIRAEVARILAAYGKGTGHVFNLGHGITPEVDPAHAGAFFEAVHELSAQYHG.

Substrate-binding positions include 27–31 (RQAGR), Asp-78, Tyr-155, Ser-210, and His-328.

Belongs to the uroporphyrinogen decarboxylase family. Homodimer.

The protein localises to the cytoplasm. It carries out the reaction uroporphyrinogen III + 4 H(+) = coproporphyrinogen III + 4 CO2. It participates in porphyrin-containing compound metabolism; protoporphyrin-IX biosynthesis; coproporphyrinogen-III from 5-aminolevulinate: step 4/4. Catalyzes the decarboxylation of four acetate groups of uroporphyrinogen-III to yield coproporphyrinogen-III. This Pseudomonas aeruginosa (strain UCBPP-PA14) protein is Uroporphyrinogen decarboxylase.